The chain runs to 670 residues: NADH-ubiquinone oxidoreductase chain 5 (670 aa).

19 helical membrane-spanning segments follow: residues 1–21 (MYIV…IFGH), 31–51 (IAVG…YEIL), 81–101 (LTSI…LYSM), 111–131 (TRFF…VTAD), 133–153 (FVQL…LINF), 178–198 (LFFG…SVIF), 211–231 (LLGY…IGVV), 251–271 (TPVS…FLVL), 283–303 (ILNI…TIGI), 311–331 (VIAY…GLLN), 339–359 (LTTH…VIHG), 375–395 (LMPL…GFPF), 421–441 (AIIG…LLIL), 462–482 (TNMV…GYVT), 519–539 (LLPL…YFNI), 566–586 (FDFL…YDVM), 594–614 (LWEK…FTAL), 629–649 (IVQT…TGFI), and 650–670 (YMEL…IKID).

The protein belongs to the complex I subunit 5 family.

Its subcellular location is the mitochondrion inner membrane. It catalyses the reaction a ubiquinone + NADH + 5 H(+)(in) = a ubiquinol + NAD(+) + 4 H(+)(out). Core subunit of the mitochondrial membrane respiratory chain NADH dehydrogenase (Complex I) that is believed to belong to the minimal assembly required for catalysis. Complex I functions in the transfer of electrons from NADH to the respiratory chain. The immediate electron acceptor for the enzyme is believed to be ubiquinone. The protein is NADH-ubiquinone oxidoreductase chain 5 (nad5) of Dictyostelium discoideum (Social amoeba).